Consider the following 324-residue polypeptide: Delta-aminolevulinic acid dehydratase (324 aa).

Residues C120, C122, and C130 each contribute to the Zn(2+) site. The active-site Schiff-base intermediate with substrate is the K195. 5-aminolevulinate contacts are provided by R205 and R216. Position 232 (E232) interacts with Mg(2+). The Schiff-base intermediate with substrate role is filled by K247. Residues S273 and Y312 each contribute to the 5-aminolevulinate site.

This sequence belongs to the ALAD family. In terms of assembly, homooctamer. Zn(2+) serves as cofactor.

It catalyses the reaction 2 5-aminolevulinate = porphobilinogen + 2 H2O + H(+). It participates in porphyrin-containing compound metabolism; protoporphyrin-IX biosynthesis; coproporphyrinogen-III from 5-aminolevulinate: step 1/4. With respect to regulation, allosteric enzyme. Stimulated by magnesium ions. Catalyzes an early step in the biosynthesis of tetrapyrroles. Binds two molecules of 5-aminolevulinate per subunit, each at a distinct site, and catalyzes their condensation to form porphobilinogen. The protein is Delta-aminolevulinic acid dehydratase (hemB) of Escherichia coli (strain K12).